The chain runs to 509 residues: Maturase K (509 aa).

This sequence belongs to the intron maturase 2 family. MatK subfamily.

It is found in the plastid. Its subcellular location is the chloroplast. Its function is as follows. Usually encoded in the trnK tRNA gene intron. Probably assists in splicing its own and other chloroplast group II introns. The protein is Maturase K of Anthocercis angustifolia (Narrow-leaf ray-flower).